A 556-amino-acid chain; its full sequence is MTMLKNPSNKYRAFPAIDIPDRTWPSKAITQAPIWLSSDLRDGNQSLIEPMDAAKKMRFFKTLVQVGLKEIEVGFPSASQTDFDFVRELIEGGHIPDDVTIQVLTQAREDLITRTFESLKGAKQAIVHYYNATAPSFRRIVFNQDKAGVIQIAVNAGRIIKRLAEQNPETNWRFEYSPEIFSSTEPEFAVEVCNAVIEVFQPTPEQKLILNLPATVEAATPNVYADQIEWFCRHIDRRDSVLVSLHTHNDRGTGVAATELGLMAGADRVEGCLFGNGERTGNVDLVTVALNMYTQGVDPQLDFSDIDAVRKVVEECNQLPVHPRHPYVGDLVHTAFSGSHQDAIRKGFSQQDPNGLWEVPYLPIDPADIGRSYEAVIRVNSQSGKGGITFLLEQEYGISLPRRMQIEFSQVVQKETDRLGLEMSAKQIYALLEAEYLQATAPYTLKGHRLQEENGTSAVDVEVAADGEVIHWRGIGKGPLEALVAALPVKLEIMDYHEHAIGAGSNAKAAAYIEVRLDGERPLHGIGIDENITTASIRALFSAMNRALHQAQEAAA.

The 275-residue stretch at P33–D307 folds into the Pyruvate carboxyltransferase domain. Residues D42, H246, H248, and N282 each coordinate Mg(2+). The regulatory domain stretch occupies residues A439–A556.

It belongs to the alpha-IPM synthase/homocitrate synthase family. LeuA type 2 subfamily. Homodimer. The cofactor is Mg(2+).

The protein localises to the cytoplasm. It catalyses the reaction 3-methyl-2-oxobutanoate + acetyl-CoA + H2O = (2S)-2-isopropylmalate + CoA + H(+). The protein operates within amino-acid biosynthesis; L-leucine biosynthesis; L-leucine from 3-methyl-2-oxobutanoate: step 1/4. Its function is as follows. Catalyzes the condensation of the acetyl group of acetyl-CoA with 3-methyl-2-oxobutanoate (2-ketoisovalerate) to form 3-carboxy-3-hydroxy-4-methylpentanoate (2-isopropylmalate). The sequence is that of 2-isopropylmalate synthase from Stutzerimonas stutzeri (strain A1501) (Pseudomonas stutzeri).